The following is a 93-amino-acid chain: Phosphoribosyl-ATP pyrophosphatase (93 aa).

It belongs to the PRA-PH family.

It is found in the cytoplasm. It carries out the reaction 1-(5-phospho-beta-D-ribosyl)-ATP + H2O = 1-(5-phospho-beta-D-ribosyl)-5'-AMP + diphosphate + H(+). It functions in the pathway amino-acid biosynthesis; L-histidine biosynthesis; L-histidine from 5-phospho-alpha-D-ribose 1-diphosphate: step 2/9. This chain is Phosphoribosyl-ATP pyrophosphatase, found in Mycolicibacterium paratuberculosis (strain ATCC BAA-968 / K-10) (Mycobacterium paratuberculosis).